Here is a 238-residue protein sequence, read N- to C-terminus: Large ribosomal subunit protein uL2 (238 aa).

The tract at residues 197 to 219 is disordered; that stretch reads ASDHPFGGKRHSNHSKPFTVSKW.

It belongs to the universal ribosomal protein uL2 family. As to quaternary structure, part of the 50S ribosomal subunit. Forms a bridge to the 30S subunit in the 70S ribosome.

One of the primary rRNA binding proteins. Required for association of the 30S and 50S subunits to form the 70S ribosome, for tRNA binding and peptide bond formation. It has been suggested to have peptidyltransferase activity; this is somewhat controversial. Makes several contacts with the 16S rRNA in the 70S ribosome. The chain is Large ribosomal subunit protein uL2 from Nanoarchaeum equitans (strain Kin4-M).